Here is an 813-residue protein sequence, read N- to C-terminus: Kinesin-like protein KIN-8B (813 aa).

Positions 14–345 constitute a Kinesin motor domain; that stretch reads TLTVAVKCRP…LKYADRAKEI (332 aa). Residue 104-111 participates in ATP binding; that stretch reads GSTGSGKT. Positions 349 to 391 form a coiled coil; it reads IQKNIGTIDTHMSDYQRMIDNLQSEVSQLKTQLAEKESQLSIK. 2 disordered regions span residues 664-694 and 756-813; these read GSRP…PRMA and AVST…RQHQ. Polar residues-rich tracts occupy residues 682 to 694, 761 to 791, and 804 to 813; these read YPQT…PRMA, GARN…NSHT, and KGNNTQRQHQ.

The protein belongs to the TRAFAC class myosin-kinesin ATPase superfamily. Kinesin family. KIN-8 subfamily.

This chain is Kinesin-like protein KIN-8B, found in Arabidopsis thaliana (Mouse-ear cress).